A 367-amino-acid chain; its full sequence is Ferrochelatase (367 aa).

The Fe cation site is built by His-226 and Glu-307.

It belongs to the ferrochelatase family.

Its subcellular location is the cytoplasm. It carries out the reaction heme b + 2 H(+) = protoporphyrin IX + Fe(2+). Its pathway is porphyrin-containing compound metabolism; protoheme biosynthesis; protoheme from protoporphyrin-IX: step 1/1. In terms of biological role, catalyzes the ferrous insertion into protoporphyrin IX. The polypeptide is Ferrochelatase (Burkholderia pseudomallei (strain 1106a)).